The chain runs to 91 residues: Elongation factor 1-beta (91 aa).

It belongs to the EF-1-beta/EF-1-delta family.

Promotes the exchange of GDP for GTP in EF-1-alpha/GDP, thus allowing the regeneration of EF-1-alpha/GTP that could then be used to form the ternary complex EF-1-alpha/GTP/AAtRNA. In Thermococcus kodakarensis (strain ATCC BAA-918 / JCM 12380 / KOD1) (Pyrococcus kodakaraensis (strain KOD1)), this protein is Elongation factor 1-beta.